Consider the following 486-residue polypeptide: UDP-N-acetylmuramoyl-L-alanyl-D-glutamate--2,6-diaminopimelate ligase (486 aa).

Residue serine 26 coordinates UDP-N-acetyl-alpha-D-muramoyl-L-alanyl-D-glutamate. 104–110 (GTNGKTS) provides a ligand contact to ATP. UDP-N-acetyl-alpha-D-muramoyl-L-alanyl-D-glutamate contacts are provided by residues 152 to 153 (TT), serine 179, glutamine 185, and arginine 187. Lysine 219 carries the N6-carboxylysine modification. Residues arginine 383, 407–410 (DNPR), glycine 455, and glutamate 459 contribute to the meso-2,6-diaminopimelate site. A Meso-diaminopimelate recognition motif motif is present at residues 407–410 (DNPR).

It belongs to the MurCDEF family. MurE subfamily. Requires Mg(2+) as cofactor. Post-translationally, carboxylation is probably crucial for Mg(2+) binding and, consequently, for the gamma-phosphate positioning of ATP.

It is found in the cytoplasm. It catalyses the reaction UDP-N-acetyl-alpha-D-muramoyl-L-alanyl-D-glutamate + meso-2,6-diaminopimelate + ATP = UDP-N-acetyl-alpha-D-muramoyl-L-alanyl-gamma-D-glutamyl-meso-2,6-diaminopimelate + ADP + phosphate + H(+). Its pathway is cell wall biogenesis; peptidoglycan biosynthesis. Its function is as follows. Catalyzes the addition of meso-diaminopimelic acid to the nucleotide precursor UDP-N-acetylmuramoyl-L-alanyl-D-glutamate (UMAG) in the biosynthesis of bacterial cell-wall peptidoglycan. This is UDP-N-acetylmuramoyl-L-alanyl-D-glutamate--2,6-diaminopimelate ligase from Caulobacter vibrioides (strain ATCC 19089 / CIP 103742 / CB 15) (Caulobacter crescentus).